The following is a 687-amino-acid chain: Glycine--tRNA ligase beta subunit (687 aa).

This sequence belongs to the class-II aminoacyl-tRNA synthetase family. In terms of assembly, tetramer of two alpha and two beta subunits.

The protein localises to the cytoplasm. It carries out the reaction tRNA(Gly) + glycine + ATP = glycyl-tRNA(Gly) + AMP + diphosphate. In Neisseria meningitidis serogroup A / serotype 4A (strain DSM 15465 / Z2491), this protein is Glycine--tRNA ligase beta subunit.